Here is a 375-residue protein sequence, read N- to C-terminus: 23S rRNA (uracil(747)-C(5))-methyltransferase RlmC (375 aa).

The [4Fe-4S] cluster site is built by Cys-3, Cys-11, Cys-14, and Cys-87. Residues Gln-212, Phe-241, Glu-262, and Asn-307 each contribute to the S-adenosyl-L-methionine site. The active-site Nucleophile is the Cys-334.

The protein belongs to the class I-like SAM-binding methyltransferase superfamily. RNA M5U methyltransferase family. RlmC subfamily.

The enzyme catalyses uridine(747) in 23S rRNA + S-adenosyl-L-methionine = 5-methyluridine(747) in 23S rRNA + S-adenosyl-L-homocysteine + H(+). Functionally, catalyzes the formation of 5-methyl-uridine at position 747 (m5U747) in 23S rRNA. The protein is 23S rRNA (uracil(747)-C(5))-methyltransferase RlmC of Salmonella paratyphi A (strain ATCC 9150 / SARB42).